The following is a 205-amino-acid chain: Regulator of G-protein signaling 4 (205 aa).

S-palmitoyl cysteine attachment occurs at residues cysteine 2, cysteine 12, and cysteine 95. The region spanning 62 to 178 (SLENLINHEC…LKSRFYLDLT (117 aa)) is the RGS domain.

Post-translationally, either Cys-2 or Cys-12 or both are palmitoylated. Phosphorylated by cyclic GMP-dependent protein kinase.

In terms of biological role, inhibits signal transduction by increasing the GTPase activity of G protein alpha subunits thereby driving them into their inactive GDP-bound form. Activity on G(z)-alpha is inhibited by phosphorylation of the G-protein. Activity on G(z)-alpha and G(i)-alpha-1 is inhibited by palmitoylation of the G-protein. This Rattus norvegicus (Rat) protein is Regulator of G-protein signaling 4 (Rgs4).